The following is a 192-amino-acid chain: Ribosome maturation factor RimM (192 aa).

The PRC barrel domain occupies 115-189 (EGEYYLSDLI…RIEITPPKGL (75 aa)).

This sequence belongs to the RimM family. As to quaternary structure, binds ribosomal protein uS19.

The protein localises to the cytoplasm. An accessory protein needed during the final step in the assembly of 30S ribosomal subunit, possibly for assembly of the head region. Essential for efficient processing of 16S rRNA. May be needed both before and after RbfA during the maturation of 16S rRNA. It has affinity for free ribosomal 30S subunits but not for 70S ribosomes. In Acaryochloris marina (strain MBIC 11017), this protein is Ribosome maturation factor RimM.